A 222-amino-acid polypeptide reads, in one-letter code: Endonuclease V (222 aa).

Residues aspartate 34 and aspartate 102 each coordinate Mg(2+).

It belongs to the endonuclease V family. It depends on Mg(2+) as a cofactor.

The protein localises to the cytoplasm. The enzyme catalyses Endonucleolytic cleavage at apurinic or apyrimidinic sites to products with a 5'-phosphate.. In terms of biological role, DNA repair enzyme involved in the repair of deaminated bases. Selectively cleaves double-stranded DNA at the second phosphodiester bond 3' to a deoxyinosine leaving behind the intact lesion on the nicked DNA. In Proteus mirabilis (strain HI4320), this protein is Endonuclease V.